Reading from the N-terminus, the 427-residue chain is Histidinol dehydrogenase (427 aa).

NAD(+)-binding residues include tyrosine 127, glutamine 185, and asparagine 208. Serine 232, glutamine 254, and histidine 257 together coordinate substrate. Zn(2+) contacts are provided by glutamine 254 and histidine 257. Active-site proton acceptor residues include glutamate 321 and histidine 322. Residues histidine 322, aspartate 355, glutamate 409, and histidine 414 each contribute to the substrate site. Position 355 (aspartate 355) interacts with Zn(2+). Residue histidine 414 participates in Zn(2+) binding.

The protein belongs to the histidinol dehydrogenase family. Requires Zn(2+) as cofactor.

It carries out the reaction L-histidinol + 2 NAD(+) + H2O = L-histidine + 2 NADH + 3 H(+). It functions in the pathway amino-acid biosynthesis; L-histidine biosynthesis; L-histidine from 5-phospho-alpha-D-ribose 1-diphosphate: step 9/9. Catalyzes the sequential NAD-dependent oxidations of L-histidinol to L-histidinaldehyde and then to L-histidine. The protein is Histidinol dehydrogenase of Haemophilus influenzae (strain 86-028NP).